A 1036-amino-acid polypeptide reads, in one-letter code: Putative GPI-anchored protein pfl2 (1036 aa).

A signal peptide spans 1–23 (MKFFTASTLFLLAAQSLNSGVSA). N-linked (GlcNAc...) asparagine glycans are attached at residues Asn66, Asn97, Asn165, Asn201, Asn233, Asn259, Asn277, Asn296, Asn312, Asn331, Asn347, Asn363, Asn379, Asn395, Asn410, Asn429, Asn445, Asn461, Asn477, Asn493, Asn509, Asn524, Asn543, Asn559, and Asn573. 2 disordered regions span residues 88-130 (SSSL…SSLA) and 147-183 (SSLASSSTTSSSLASSSTNSTTSATPTSSATSSSLSS). The span at 243–585 (SSISSTVSSS…ITSSASGSTG (343 aa)) shows a compositional bias: low complexity. The segment at 243 to 710 (SSISSTVSSS…PLSNSTVAPT (468 aa)) is disordered. A compositionally biased stretch (polar residues) spans 586–595 (EFTNTNSGNG). The segment covering 597 to 630 (VSGSVTTPTSTPLSNSTVAPTSTFTSSGFNTTSG) has biased composition (low complexity). Residues Asn611, Asn626, Asn642, Asn657, Asn673, Asn688, Asn704, Asn719, and Asn735 are each glycosylated (N-linked (GlcNAc...) asparagine). The span at 631-647 (LPTSSASTPLSNSTVAP) shows a compositional bias: polar residues. Residues 648 to 692 (TSTFTSSGFNTTSGLPTSSASTPSSNSSIVPTSTFTSSGFNTTSG) show a composition bias toward low complexity. Positions 693 to 709 (LPTSSASTPLSNSTVAP) are enriched in polar residues. Low complexity-rich tracts occupy residues 722–831 (SGLP…TTAS), 838–862 (PTAAPTNEPTVTTGTETTEGTATYT), and 885–906 (IPVNPGNPSSSVSAPPTTSFTP). Disordered stretches follow at residues 722–862 (SGLP…ATYT) and 885–918 (IPVNPGNPSSSVSAPPTTSFTPGPGGSGYPSYSN). N-linked (GlcNAc...) asparagine glycans are attached at residues Asn918, Asn924, Asn930, Asn933, Asn939, Asn947, and Asn977. The tract at residues 978-1011 (TTATSGSDDDVKTASTSSSTSYTSSSSSSSSTTS) is disordered. The span at 990–1011 (TASTSSSTSYTSSSSSSSSTTS) shows a compositional bias: low complexity. Ser1011 is lipidated: GPI-anchor amidated serine. Residues 1012-1036 (AASSKASVSMGLNGLMIAAVILLVA) constitute a propeptide, removed in mature form.

It is found in the cell membrane. May be involved in agglutination during conjugation or other aspects of colony formation. Induces flocculation when overexpressed. The chain is Putative GPI-anchored protein pfl2 from Schizosaccharomyces pombe (strain 972 / ATCC 24843) (Fission yeast).